A 226-amino-acid chain; its full sequence is 2-C-methyl-D-erythritol 4-phosphate cytidylyltransferase (226 aa).

This sequence belongs to the IspD/TarI cytidylyltransferase family. IspD subfamily.

The catalysed reaction is 2-C-methyl-D-erythritol 4-phosphate + CTP + H(+) = 4-CDP-2-C-methyl-D-erythritol + diphosphate. The protein operates within isoprenoid biosynthesis; isopentenyl diphosphate biosynthesis via DXP pathway; isopentenyl diphosphate from 1-deoxy-D-xylulose 5-phosphate: step 2/6. In terms of biological role, catalyzes the formation of 4-diphosphocytidyl-2-C-methyl-D-erythritol from CTP and 2-C-methyl-D-erythritol 4-phosphate (MEP). This is 2-C-methyl-D-erythritol 4-phosphate cytidylyltransferase from Bacillus thuringiensis (strain Al Hakam).